Consider the following 258-residue polypeptide: Short-chain dehydrogenase/reductase aba4 (258 aa).

NADP(+) is bound by residues isoleucine 20, aspartate 66, and lysine 130. Catalysis depends on proton donor residues serine 146 and tyrosine 160. NADP(+) is bound by residues tyrosine 160, lysine 164, isoleucine 193, and threonine 195. The Lowers pKa of active site Tyr role is filled by lysine 164.

Belongs to the short-chain dehydrogenases/reductases (SDR) family.

It participates in hormone biosynthesis. In terms of biological role, short-chain dehydrogenase/reductase; part of the gene cluster that mediates the biosynthesis of abscisic acid (ABA), a phytohormone that acts antagonistically toward salicylic acid (SA), jasmonic acid (JA) and ethylene (ETH) signaling, to impede plant defense responses. The first step of the pathway catalyzes the reaction from farnesyl diphosphate to alpha-ionylideneethane performed by the alpha-ionylideneethane synthase aba3 via a three-step reaction mechanism involving 2 neutral intermediates, beta-farnesene and allofarnesene. The cytochrome P450 monooxygenase aba1 might then be involved in the conversion of alpha-ionylideneethane to alpha-ionylideneacetic acid. Alpha-ionylideneacetic acid is further converted to abscisic acid in 2 steps involving the cytochrome P450 monooxygenase aba2 and the short-chain dehydrogenase/reductase aba4, via the intermediates 1'-deoxy-ABA or 1',4'-trans-diol-ABA, depending on the order of action of these 2 enzymes. Aba2 is responsible for the hydroxylation of carbon atom C-1' and aba4 might be involved in the oxidation of the C-4' carbon atom. In Botryotinia fuckeliana (strain B05.10) (Noble rot fungus), this protein is Short-chain dehydrogenase/reductase aba4.